We begin with the raw amino-acid sequence, 55 residues long: Potassium channel toxin alpha-KTx 17.1 (55 aa).

A signal peptide spans 1–23 (MKFIIVLILISVLIATIVPVNEA). Pyrrolidone carboxylic acid is present on glutamine 24. 3 disulfide bridges follow: cysteine 27-cysteine 43, cysteine 33-cysteine 48, and cysteine 37-cysteine 50. Threonine amide is present on threonine 53.

This sequence belongs to the short scorpion toxin superfamily. Potassium channel inhibitor family. Alpha-KTx 17 subfamily. Expressed by the venom gland.

The protein resides in the secreted. Blocker of potassium channels, which inhibits both the delayed rectifier and fast transient potassium current. The inhibition is reversible and voltage-independent. It causes a depolarizing shift of the steady-state activation curve of the currents, without changing their steady-state inactivation behavior. The polypeptide is Potassium channel toxin alpha-KTx 17.1 (Olivierus martensii (Manchurian scorpion)).